Reading from the N-terminus, the 366-residue chain is GTP-binding protein 10 (366 aa).

The 136-residue stretch at 13–148 (GNFIDNLRIF…RIVHLDLKVI (136 aa)) folds into the Obg domain. Positions 149–344 (ADVGLVGFPN…LKSCIRKALD (196 aa)) constitute an OBG-type G domain. GTP contacts are provided by residues 155–162 (GFPNAGKS), 202–206 (DLPGL), and 278–281 (NKMD). A compositionally biased stretch (basic and acidic residues) spans 346-355 (QDGKESDAHR). The disordered stretch occupies residues 346 to 366 (QDGKESDAHRSKQLLNLQSSS).

It belongs to the TRAFAC class OBG-HflX-like GTPase superfamily. OBG GTPase family.

It localises to the nucleus. It is found in the nucleolus. May be involved in the ribosome maturation process. The polypeptide is GTP-binding protein 10 (Gtpbp10) (Mus musculus (Mouse)).